The chain runs to 675 residues: Methionine--tRNA ligase (675 aa).

The 'HIGH' region signature appears at 15–25 (PYANGSIHLGH). Zn(2+) contacts are provided by C146, C149, C159, and C162. The short motif at 332 to 336 (KMSKS) is the 'KMSKS' region element. K335 is a binding site for ATP. One can recognise a tRNA-binding domain in the interval 573–675 (DFAKVDMRIA…SGAQPGMQVK (103 aa)).

This sequence belongs to the class-I aminoacyl-tRNA synthetase family. MetG type 1 subfamily. Homodimer. Zn(2+) serves as cofactor.

The protein localises to the cytoplasm. The enzyme catalyses tRNA(Met) + L-methionine + ATP = L-methionyl-tRNA(Met) + AMP + diphosphate. Is required not only for elongation of protein synthesis but also for the initiation of all mRNA translation through initiator tRNA(fMet) aminoacylation. The protein is Methionine--tRNA ligase of Yersinia pseudotuberculosis serotype I (strain IP32953).